Here is a 610-residue protein sequence, read N- to C-terminus: All-trans-retinol 13,14-reductase (610 aa).

A signal peptide spans Met-1 to Cys-18.

The protein belongs to the carotenoid/retinoid oxidoreductase family. CrtISO subfamily. NAD(+) is required as a cofactor. NADP(+) serves as cofactor. It depends on FAD as a cofactor.

It localises to the endoplasmic reticulum membrane. It catalyses the reaction all-trans-13,14-dihydroretinol + A = all-trans-retinol + AH2. Functionally, catalyzes the saturation of all-trans-retinol to all-trans-13,14-dihydroretinol. Does not exhibit any activity toward all-trans-retinoic acid, nor 9-cis, 11-cis or 13-cis-retinol isomers. May play a role in the metabolism of vitamin A. Independently of retinol conversion, may regulate liver metabolism upstream of MLXIPL/ChREBP. May play a role in adipocyte differentiation. This chain is All-trans-retinol 13,14-reductase (RETSAT), found in Macaca fascicularis (Crab-eating macaque).